Reading from the N-terminus, the 1400-residue chain is DNA-directed RNA polymerase subunit beta' (1400 aa).

Zn(2+)-binding residues include cysteine 70, cysteine 72, cysteine 85, and cysteine 88. Residues aspartate 460, aspartate 462, and aspartate 464 each contribute to the Mg(2+) site. Zn(2+) is bound by residues cysteine 814, cysteine 888, cysteine 895, and cysteine 898.

This sequence belongs to the RNA polymerase beta' chain family. The RNAP catalytic core consists of 2 alpha, 1 beta, 1 beta' and 1 omega subunit. When a sigma factor is associated with the core the holoenzyme is formed, which can initiate transcription. It depends on Mg(2+) as a cofactor. Zn(2+) serves as cofactor.

It catalyses the reaction RNA(n) + a ribonucleoside 5'-triphosphate = RNA(n+1) + diphosphate. DNA-dependent RNA polymerase catalyzes the transcription of DNA into RNA using the four ribonucleoside triphosphates as substrates. The polypeptide is DNA-directed RNA polymerase subunit beta' (Methylococcus capsulatus (strain ATCC 33009 / NCIMB 11132 / Bath)).